The primary structure comprises 129 residues: Small ribosomal subunit protein uS11 (129 aa).

It belongs to the universal ribosomal protein uS11 family. As to quaternary structure, part of the 30S ribosomal subunit. Interacts with proteins S7 and S18. Binds to IF-3.

Located on the platform of the 30S subunit, it bridges several disparate RNA helices of the 16S rRNA. Forms part of the Shine-Dalgarno cleft in the 70S ribosome. This Dechloromonas aromatica (strain RCB) protein is Small ribosomal subunit protein uS11.